The sequence spans 1018 residues: MWGQRLFAGTAVAQSVSFPGLVQMDEDTHYNKVEDVVGSHVEDAVTFWAQNVSKNKDIMKIGCSLSEVCPLANSVFGNLDPKKIYGGLFSEDKCWYRCKVLKTISDDKCLVRYIDYGNTEILNRSDIVEIPPELQFSSIAKKYRLWGLQIPSGQEVTQFDQGRTFLGSLIFEKEIKMRIKATYQDGTVIAQAEYGTVDIGEEVAKKGFAEKCRLTSGIDACEAKKPDPNQLALRSLKNPIPLWGRRSNQSTFSRPKGHFNGRLTLDVKYETSAGNHVTFPKESLAAGDFNLGSNVSLAKIKQDQKLIEENEKLKTEKEVLLENYKALELKVEQTAQELQQEKTATMDLTKHLESTLKTCVGTRLKNLAAKVELLKEIRHINISIRFGNDLSDAMQVLDEGSFTTLASLNELEKIWAEYNVAQEKIQTCLNENEGNILIAERNEVQQKLFVAVDVFILEVDDLPLDKRLKTLQDLATSLESVYGKAKEGTNNSEETLRKFYDWQCTKREEFASIRSETEASLQHLVAWFQSSQKVFDLSLDEPLTSEDLIGNIDEILEKTESCVCKELELSLIEQGVIDKEIILSTYSQVLQKIHSEEKFIATLLSKYKDSVEFKKQMIDCLNKNPNVDYLLSIKKTLKGLKAQLRWKLVEKSNLEESDDHDGTEIEKIKQEITQLRNSVFQEIYHEREEYEKLNSLTQKWFPELPLLYPEIGLLKYMNSGGLLTMSLERDLLDTEPMKELSSKRPLVCSEVNGQPVLLKGYSVDVDTEGRVIQRAASYHRACGYAKEESGLLPLIFLFLCKSDPVAYLMVPYYPKANLSAVQASMPLTSEEALKVMKGVARGLHTLHSANIIHGSLHQNNVFALNREQGIVGDYDFTKSESQRASVNAMVGGLSLLSPELKTGKPPSASSDLYAYGCLFLWLSVQNQEFETNEDGIPKVDQFHLDDNVKSLLCSLIYFRSSMTAEQVLNAECFLLPKGKSVPIPEKEIECTQHSREDESKMESLDRYSEKTRNGEANP.

Positions 78–137 (NLDPKKIYGGLFSEDKCWYRCKVLKTISDDKCLVRYIDYGNTEILNRSDIVEIPPELQFS) constitute a Tudor domain. Residues 298–358 (AKIKQDQKLI…TKHLESTLKT (61 aa)) are a coiled coil. Residues 711-1018 (IGLLKYMNSG…EKTRNGEANP (308 aa)) enclose the Protein kinase domain. Residues 717–725 (MNSGGLLTM) and lysine 738 contribute to the ATP site. Positions 988-1018 (IECTQHSREDESKMESLDRYSEKTRNGEANP) are disordered.

This sequence belongs to the protein kinase superfamily. Ser/Thr protein kinase family. In terms of tissue distribution, testis specific. Expressed only in male germ cells.

The enzyme catalyses L-seryl-[protein] + ATP = O-phospho-L-seryl-[protein] + ADP + H(+). It carries out the reaction L-threonyl-[protein] + ATP = O-phospho-L-threonyl-[protein] + ADP + H(+). The sequence is that of Serine/threonine-protein kinase 31 (Stk31) from Mus musculus (Mouse).